Here is a 60-residue protein sequence, read N- to C-terminus: uncharacterized protein (60 aa).

This is an uncharacterized protein from Acidianus convivator (ATV).